The sequence spans 608 residues: DNA mismatch repair protein MutL (608 aa).

Residues 363-397 (ASLAMARKPDPPRFHETARPQPDPRHTPGTESVSV) are disordered. The span at 369-390 (RKPDPPRFHETARPQPDPRHTP) shows a compositional bias: basic and acidic residues.

It belongs to the DNA mismatch repair MutL/HexB family.

This protein is involved in the repair of mismatches in DNA. It is required for dam-dependent methyl-directed DNA mismatch repair. May act as a 'molecular matchmaker', a protein that promotes the formation of a stable complex between two or more DNA-binding proteins in an ATP-dependent manner without itself being part of a final effector complex. The protein is DNA mismatch repair protein MutL of Pelobacter propionicus (strain DSM 2379 / NBRC 103807 / OttBd1).